The primary structure comprises 345 residues: Small ribosomal subunit protein mS45 (345 aa).

Residues methionine 1–phenylalanine 27 constitute a mitochondrion transit peptide.

The protein belongs to the mitochondrion-specific ribosomal protein mS45 family. In terms of assembly, component of the mitochondrial small ribosomal subunit (mt-SSU). Mature yeast 74S mitochondrial ribosomes consist of a small (37S) and a large (54S) subunit. The 37S small subunit contains a 15S ribosomal RNA (15S mt-rRNA) and 34 different proteins. The 54S large subunit contains a 21S rRNA (21S mt-rRNA) and 46 different proteins.

It localises to the mitochondrion. In terms of biological role, component of the mitochondrial ribosome (mitoribosome), a dedicated translation machinery responsible for the synthesis of mitochondrial genome-encoded proteins, including at least some of the essential transmembrane subunits of the mitochondrial respiratory chain. The mitoribosomes are attached to the mitochondrial inner membrane and translation products are cotranslationally integrated into the membrane. This chain is Small ribosomal subunit protein mS45 (MRPS35), found in Saccharomyces cerevisiae (strain ATCC 204508 / S288c) (Baker's yeast).